Here is a 209-residue protein sequence, read N- to C-terminus: Transmembrane emp24 domain-containing protein B (209 aa).

The N-terminal stretch at 1–24 (MNKTNQLINICILVTLFLIGSSSA) is a signal peptide. At 25–174 (LTLQVEPKSQ…RDTSESTNAR (150 aa)) the chain is on the lumenal side. Positions 34-119 (QECFYNFIES…AKVVTFTWAS (86 aa)) constitute a GOLD domain. A helical transmembrane segment spans residues 175–195 (VVWWTIAEVIVLVVMGVGQIW). At 196-209 (YLRKWFDNKSTGRV) the chain is on the cytoplasmic side.

Belongs to the EMP24/GP25L family.

The protein resides in the cytoplasmic vesicle membrane. Could have a role in the budding of coatomer-coated and other species of coated vesicles. This Dictyostelium discoideum (Social amoeba) protein is Transmembrane emp24 domain-containing protein B (empB).